The sequence spans 392 residues: Formate-dependent phosphoribosylglycinamide formyltransferase (392 aa).

Residues 22 to 23 and glutamate 82 each bind N(1)-(5-phospho-beta-D-ribosyl)glycinamide; that span reads EL. ATP contacts are provided by residues arginine 114, lysine 155, 160-165, 195-198, and glutamate 203; these read SSGKGQ and EGVV. The ATP-grasp domain occupies 119–308; sequence RLAAEELGLP…EFALHVRAFL (190 aa). Mg(2+)-binding residues include glutamate 267 and glutamate 279. N(1)-(5-phospho-beta-D-ribosyl)glycinamide is bound by residues aspartate 286, lysine 355, and 362-363; that span reads RR.

This sequence belongs to the PurK/PurT family. In terms of assembly, homodimer.

The enzyme catalyses N(1)-(5-phospho-beta-D-ribosyl)glycinamide + formate + ATP = N(2)-formyl-N(1)-(5-phospho-beta-D-ribosyl)glycinamide + ADP + phosphate + H(+). Its pathway is purine metabolism; IMP biosynthesis via de novo pathway; N(2)-formyl-N(1)-(5-phospho-D-ribosyl)glycinamide from N(1)-(5-phospho-D-ribosyl)glycinamide (formate route): step 1/1. Involved in the de novo purine biosynthesis. Catalyzes the transfer of formate to 5-phospho-ribosyl-glycinamide (GAR), producing 5-phospho-ribosyl-N-formylglycinamide (FGAR). Formate is provided by PurU via hydrolysis of 10-formyl-tetrahydrofolate. This is Formate-dependent phosphoribosylglycinamide formyltransferase from Salmonella paratyphi A (strain ATCC 9150 / SARB42).